We begin with the raw amino-acid sequence, 458 residues long: UDP-N-acetylmuramoylalanine--D-glutamate ligase (458 aa).

124 to 130 (GSDGKTT) serves as a coordination point for ATP.

It belongs to the MurCDEF family.

It localises to the cytoplasm. The enzyme catalyses UDP-N-acetyl-alpha-D-muramoyl-L-alanine + D-glutamate + ATP = UDP-N-acetyl-alpha-D-muramoyl-L-alanyl-D-glutamate + ADP + phosphate + H(+). It functions in the pathway cell wall biogenesis; peptidoglycan biosynthesis. In terms of biological role, cell wall formation. Catalyzes the addition of glutamate to the nucleotide precursor UDP-N-acetylmuramoyl-L-alanine (UMA). The polypeptide is UDP-N-acetylmuramoylalanine--D-glutamate ligase (Clostridium botulinum (strain Loch Maree / Type A3)).